The sequence spans 359 residues: 3-dehydroquinate synthase (359 aa).

NAD(+) contacts are provided by residues 72-77, 106-110, 130-131, K143, K152, and 170-173; these read EGEIHK, GVIGD, TS, and CLKT. Residues E185, H248, and H264 each contribute to the Zn(2+) site.

The protein belongs to the sugar phosphate cyclases superfamily. Dehydroquinate synthase family. Co(2+) serves as cofactor. The cofactor is Zn(2+). Requires NAD(+) as cofactor.

The protein resides in the cytoplasm. It carries out the reaction 7-phospho-2-dehydro-3-deoxy-D-arabino-heptonate = 3-dehydroquinate + phosphate. The protein operates within metabolic intermediate biosynthesis; chorismate biosynthesis; chorismate from D-erythrose 4-phosphate and phosphoenolpyruvate: step 2/7. Its function is as follows. Catalyzes the conversion of 3-deoxy-D-arabino-heptulosonate 7-phosphate (DAHP) to dehydroquinate (DHQ). The polypeptide is 3-dehydroquinate synthase (Dehalococcoides mccartyi (strain CBDB1)).